Here is a 290-residue protein sequence, read N- to C-terminus: tRNA(Ile)-lysidine synthase, chloroplastic (290 aa).

33–38 (SGGQDS) serves as a coordination point for ATP.

It belongs to the tRNA(Ile)-lysidine synthase family.

It localises to the plastid. The protein resides in the chloroplast. It carries out the reaction cytidine(34) in tRNA(Ile2) + L-lysine + ATP = lysidine(34) in tRNA(Ile2) + AMP + diphosphate + H(+). Its function is as follows. Ligates lysine onto the cytidine present at position 34 of the AUA codon-specific tRNA(Ile) that contains the anticodon CAU, in an ATP-dependent manner. Cytidine is converted to lysidine, thus changing the amino acid specificity of the tRNA from methionine to isoleucine. The polypeptide is tRNA(Ile)-lysidine synthase, chloroplastic (Cyanidioschyzon merolae (strain NIES-3377 / 10D) (Unicellular red alga)).